We begin with the raw amino-acid sequence, 348 residues long: Dihydroorotase (348 aa).

The Zn(2+) site is built by His17 and His19. Residues 19-21 and Asn45 each bind substrate; that span reads HLR. Zn(2+) contacts are provided by Lys103, His140, and His178. At Lys103 the chain carries N6-carboxylysine. His140 contacts substrate. Leu223 contributes to the substrate binding site. Asp251 contributes to the Zn(2+) binding site. Asp251 is an active-site residue. Positions 255 and 267 each coordinate substrate.

Belongs to the metallo-dependent hydrolases superfamily. DHOase family. Class II DHOase subfamily. Homodimer. Zn(2+) serves as cofactor.

It carries out the reaction (S)-dihydroorotate + H2O = N-carbamoyl-L-aspartate + H(+). It participates in pyrimidine metabolism; UMP biosynthesis via de novo pathway; (S)-dihydroorotate from bicarbonate: step 3/3. Its function is as follows. Catalyzes the reversible cyclization of carbamoyl aspartate to dihydroorotate. The protein is Dihydroorotase of Yersinia pseudotuberculosis serotype I (strain IP32953).